We begin with the raw amino-acid sequence, 218 residues long: Probable nicotinate-nucleotide adenylyltransferase (218 aa).

This sequence belongs to the NadD family.

It carries out the reaction nicotinate beta-D-ribonucleotide + ATP + H(+) = deamido-NAD(+) + diphosphate. Its pathway is cofactor biosynthesis; NAD(+) biosynthesis; deamido-NAD(+) from nicotinate D-ribonucleotide: step 1/1. Its function is as follows. Catalyzes the reversible adenylation of nicotinate mononucleotide (NaMN) to nicotinic acid adenine dinucleotide (NaAD). This Burkholderia lata (strain ATCC 17760 / DSM 23089 / LMG 22485 / NCIMB 9086 / R18194 / 383) protein is Probable nicotinate-nucleotide adenylyltransferase.